Reading from the N-terminus, the 918-residue chain is NEDD4-like E3 ubiquitin-protein ligase WWP1 (918 aa).

Residues 1–116 (MATASPRSDT…THNRKLEKVK (116 aa)) enclose the C2 domain. 3 stretches are compositionally biased toward polar residues: residues 150 to 164 (TNRSSSPPIEIQQNG), 209 to 219 (NGENTPSSPSQ), and 235 to 258 (SAPTSDTVNGESSSVLADNTSTMG). Disordered regions lie at residues 150–182 (TNRSSSPPIEIQQNGDALHENGDPATRTTPRLP) and 209–360 (NGEN…PHGR). Low complexity predominate over residues 266–281 (TTSTSNCTSTTTQEPP). WW domains are found at residues 345 to 378 (EALPSGWEQRKDPHGRTYYVDHNTRTTTWERPQP), 377 to 410 (QPLPPGWERRVDDRGRVYYVDHNTRTTTWQRPTM), 452 to 485 (GPLPPGWEKRVDSTDRVYFVNHNTKTTQWEDPRT), and 492 to 525 (EPLPEGWEIRYTREGVRYFVDHNTRTTTFKDPRN). An interaction with ERBB4 region spans residues 345 to 525 (EALPSGWEQR…RTTTFKDPRN (181 aa)). The required for interaction with and ubiquitination of AMOTL2. Required for interaction with YAP1 stretch occupies residues 345-527 (EALPSGWEQR…TTFKDPRNGK (183 aa)). One can recognise an HECT domain in the interval 584 to 918 (KPYDLRRRLY…IEETEGFGQE (335 aa)). The Glycyl thioester intermediate role is filled by Cys-886.

As to quaternary structure, interacts with the Crumbs complex components PALS1 and PATJ; interaction with the Crumbs complex is enhanced by WWP1's interaction with AMOTL2 and facilitates WWP1 localization to the plasma membrane. Interaction with the Crumbs complex promotes WWP1 monoubiquitination of AMOTL2, which activates the Hippo signaling pathway. Binds SCNN1A, SCNN1B, SCNN1G, WBP1, WBP2, DRPLA and adenovirus type 2 PIII. Interacts with TGIF. Binds KLF2 AND HIVEP3. Interacts with RNF11. Interacts with SPART. Interacts with NDFIP1 and NDFIP2; this interaction activates the E3 ubiquitin-protein ligase. Interacts with ERBB4 isoforms JM-B CYT-1 and JM-A CYT-1. Does not interact with ERB4 isoform JMA-A CYT-2. Interacts with SMAD1, SMAD2, SMAD3, SMAD5, SMAD6, SMAD7, TGFBR1 and TGFBR2. Associates with the TGFBR1:TGFBR2 receptor complex in presence of SMAD7. Interacts with SKIL isoform 1. Interacts with TP63 isoform 1 and isoform 2. Interacts (via WW domains) with ARRDC1, ARRDC2 and ARRDC3. Post-translationally, auto-ubiquitinated and ubiquitinated by RNF11.

Its subcellular location is the cytoplasm. It localises to the cell membrane. The protein localises to the nucleus. The protein resides in the cell junction. It catalyses the reaction S-ubiquitinyl-[E2 ubiquitin-conjugating enzyme]-L-cysteine + [acceptor protein]-L-lysine = [E2 ubiquitin-conjugating enzyme]-L-cysteine + N(6)-ubiquitinyl-[acceptor protein]-L-lysine.. It participates in protein modification; protein ubiquitination. With respect to regulation, activated by NDFIP1- and NDFIP2-binding. Its function is as follows. E3 ubiquitin-protein ligase which accepts ubiquitin from an E2 ubiquitin-conjugating enzyme in the form of a thioester and then directly transfers the ubiquitin to targeted substrates. Ubiquitinates and promotes degradation of SMAD2 in response to TGF-beta signaling, which requires interaction with TGIF. Ubiquitinates ERBB4 isoforms JM-A CYT-1 and JM-B CYT-1, KLF2, KLF5 and TP63 and promotes their proteasomal degradation. Ubiquitinates RNF11 without targeting it for degradation. Ubiquitinates and promotes degradation of TGFBR1; the ubiquitination is enhanced by SMAD7. Ubiquitinates SMAD6 and SMAD7. Activates the Hippo signaling pathway in response to cell contact inhibition and recruitment to the Crumbs complex at the cell membrane. Monoubiquitinates AMOTL2 which facilitates its interaction with and activation of LATS2. LATS2 then phosphorylates YAP1, excluding it from the nucleus and therefore ultimately represses YAP1-driven transcription of target genes. The protein is NEDD4-like E3 ubiquitin-protein ligase WWP1 (Wwp1) of Mus musculus (Mouse).